The chain runs to 209 residues: Small ribosomal subunit protein uS4 (209 aa).

The S4 RNA-binding domain occupies 99–164; the sequence is TRLDNVVYRM…IPRVQELKEL (66 aa).

It belongs to the universal ribosomal protein uS4 family. In terms of assembly, part of the 30S ribosomal subunit. Contacts protein S5. The interaction surface between S4 and S5 is involved in control of translational fidelity.

Functionally, one of the primary rRNA binding proteins, it binds directly to 16S rRNA where it nucleates assembly of the body of the 30S subunit. Its function is as follows. With S5 and S12 plays an important role in translational accuracy. The sequence is that of Small ribosomal subunit protein uS4 from Natranaerobius thermophilus (strain ATCC BAA-1301 / DSM 18059 / JW/NM-WN-LF).